A 150-amino-acid chain; its full sequence is uncharacterized protein (150 aa).

An N-terminal signal peptide occupies residues 1-22; the sequence is MVIALKRFSFLASIATLTVLNA. C23 is lipidated: N-palmitoyl cysteine. C23 is lipidated: S-diacylglycerol cysteine.

It belongs to the MG067/MG068/MG395 family.

Its subcellular location is the cell membrane. This is an uncharacterized protein from Mycoplasma pneumoniae (strain ATCC 29342 / M129 / Subtype 1) (Mycoplasmoides pneumoniae).